A 166-amino-acid chain; its full sequence is Early E3 18.5 kDa glycoprotein (166 aa).

An N-terminal signal peptide occupies residues 1–19 (MGPILVLLVLLSLLEAGSA). Topologically, residues 20–131 (NYDPCLDFDP…SKDNIVTFSI (112 aa)) are lumenal. N-linked (GlcNAc...) asparagine; by host glycosylation occurs at N31. Cystine bridges form between C32/C50 and C44/C106. Residues N63, N67, and N97 are each glycosylated (N-linked (GlcNAc...) asparagine; by host). The chain crosses the membrane as a helical span at residues 132-152 (AYCLCACLLTALLCVCIHLLV). The Cytoplasmic portion of the chain corresponds to 153–166 (TTRIKNANNKEKMP). Positions 162-166 (KEKMP) match the Di-lysine motif motif.

The protein belongs to the adenoviridae E19 family. In terms of processing, both disulfide bonds are absolutely critical for the interaction with MHC antigens. N-glycosylated; high-mannose.

The protein resides in the host endoplasmic reticulum membrane. Binds and retains class I heavy chains in the endoplasmic reticulum during the early period of virus infection, thereby impairing their transport to the cell surface. Also delays the expression of class I alleles that it cannot affect by direct retention. Binds transporters associated with antigen processing (TAP) and acts as a tapasin inhibitor, preventing class I/TAP association. In consequence, infected cells are masked for immune recognition by cytotoxic T-lymphocytes. In Human adenovirus B serotype 11 (strain BC34) (HAdV-11), this protein is Early E3 18.5 kDa glycoprotein.